We begin with the raw amino-acid sequence, 94 residues long: Integration host factor subunit beta (94 aa).

Belongs to the bacterial histone-like protein family. As to quaternary structure, heterodimer of an alpha and a beta chain.

Its function is as follows. This protein is one of the two subunits of integration host factor, a specific DNA-binding protein that functions in genetic recombination as well as in transcriptional and translational control. The sequence is that of Integration host factor subunit beta from Haemophilus influenzae (strain PittGG).